We begin with the raw amino-acid sequence, 446 residues long: MEDFKTIACNIFIIWLTLVIVLILLPSMFGSSLGISEVYMKILVKVLEWATLRIQKGFKDKEKLSASNGIIQRDKSPMETEIECLRQSRSQDIREGDFELGDVFYFAKKGFEAIVEDEVTQRFSSEELISWNLLTRTNNNFHYVSLRVTLIWVLGLCVRYCILLPLRITLATIGISWLVLGATLVGQLPNSRMKSWFSELVHLMCCRICARALSSAIQYHNKENKPKKGGICVANHTSPIDIIILANDGCYAMVGQVHGGLMGIIQRAMARACPHVWFERSEMRDRHLVTERLREHVSDKSKLPILIFPEGTCINNTSVMMFKKGSFEIGGTIYPVAIKYDPQFGDAFWNSSKNSMVSYLLRMMTSWALKCNVWYLPPVNRQDGEDAVQFANRVKSAIAKQGGLVELPWDGGLKRGKVKDSFKEEQQKNYSRIIAGENKSLKPTTH.

3 helical membrane-spanning segments follow: residues 11–31 (IFII…MFGS), 146–166 (LRVT…LLPL), and 168–188 (ITLA…VGQL). Positions 236 to 241 (HTSPID) match the HXXXXD motif motif.

It belongs to the 1-acyl-sn-glycerol-3-phosphate acyltransferase family.

It localises to the endoplasmic reticulum membrane. The enzyme catalyses sn-glycerol 3-phosphate + an acyl-CoA = a 1-acyl-sn-glycero-3-phosphate + CoA. The catalysed reaction is a 1-acyl-sn-glycero-3-phosphate + an acyl-CoA = a 1,2-diacyl-sn-glycero-3-phosphate + CoA. It catalyses the reaction dodecanoyl-CoA + sn-glycerol 3-phosphate = 1-dodecanoyl-sn-glycerol 3-phosphate + CoA. It carries out the reaction sn-glycerol 3-phosphate + hexadecanoyl-CoA = 1-hexadecanoyl-sn-glycero-3-phosphate + CoA. The enzyme catalyses sn-glycerol 3-phosphate + (9Z)-octadecenoyl-CoA = 1-(9Z-octadecenoyl)-sn-glycero-3-phosphate + CoA. The catalysed reaction is (9Z,12Z)-octadecadienoyl-CoA + sn-glycerol 3-phosphate = 1-(9Z,12Z)-octadecadienoyl-sn-glycero-3-phosphate + CoA. It catalyses the reaction 1-tetradecanoyl-sn-glycerol 3-phosphate + (9Z)-octadecenoyl-CoA = 1-tetradecanoyl-2-(9Z)-octadecenoyl-sn-glycero-3-phosphate + CoA. It carries out the reaction 1-hexadecanoyl-sn-glycero-3-phosphate + (9Z)-octadecenoyl-CoA = 1-hexadecanoyl-2-(9Z-octadecenoyl)-sn-glycero-3-phosphate + CoA. The enzyme catalyses 1-(9Z-octadecenoyl)-sn-glycero-3-phosphate + (9Z)-octadecenoyl-CoA = 1,2-di-(9Z-octadecenoyl)-sn-glycero-3-phosphate + CoA. The catalysed reaction is 1-(6Z,9Z,12Z-octadecatrienoyl)-sn-glycero-3-phosphate + (9Z)-octadecenoyl-CoA = (6Z,9Z,12Z)-octadecatrienoyl-2-(9Z)-octadecenoyl-sn-glycero-3-phosphate + CoA. It catalyses the reaction 1-(9Z,12Z,15Z)-octadecatrienoyl-sn-glycero-3-phosphate + (9Z)-octadecenoyl-CoA = 1-(9Z,12Z,15Z)-octadecatrienoyl-2-(9Z)-octadecenoyl-sn-glycero-3-phosphate + CoA. It carries out the reaction 1-(9Z-octadecenoyl)-sn-glycero-3-phosphate + tetradecanoyl-CoA = 1-(9Z)-octadecenoyl-2-tetradecanoyl-sn-glycero-3-phosphate + CoA. The enzyme catalyses 1-(9Z-octadecenoyl)-sn-glycero-3-phosphate + hexadecanoyl-CoA = 1-(9Z)-octadecenoyl-2-hexadecanoyl-sn-glycero-3-phosphate + CoA. The catalysed reaction is 1-(9Z-octadecenoyl)-sn-glycero-3-phosphate + octadecanoyl-CoA = 1-(9Z-octadecenoyl)-2-octadecanoyl-sn-glycero-3-phosphate + CoA. It catalyses the reaction 1-(9Z-octadecenoyl)-sn-glycero-3-phosphate + (9Z,12Z)-octadecadienoyl-CoA = 1-(9Z)-octadecenoyl-2-(9Z,12Z)-octadecadienoyl-sn-glycero-3-phosphate + CoA. It carries out the reaction 1-(5Z,8Z,11Z,14Z-eicosatetraenoyl)-sn-glycero-3-phosphate + (9Z)-octadecenoyl-CoA = 1-(5Z,8Z,11Z,14Z)-eicosatetraenoyl-2-(9Z)-octadecenoyl-sn-glycero-3-phosphate + CoA. Its pathway is glycerolipid metabolism; triacylglycerol biosynthesis. The protein operates within phospholipid metabolism; CDP-diacylglycerol biosynthesis; CDP-diacylglycerol from sn-glycerol 3-phosphate: step 1/3. Its function is as follows. Converts glycerol-3-phosphate to 1-acyl-sn-glycerol-3-phosphate (lysophosphatidic acid or LPA) by incorporating an acyl moiety at the sn-1 position of the glycerol backbone. Also converts LPA into 1,2-diacyl-sn-glycerol-3-phosphate (phosphatidic acid or PA) by incorporating an acyl moiety at the sn-2 position of the glycerol backbone. Protects cells against lipotoxicity. This is Glycerol-3-phosphate acyltransferase 3 from Xenopus laevis (African clawed frog).